The following is a 414-amino-acid chain: MVDHLKRQDEKVFAAIEAELGRQRSKIELIASENFVSEAVMEAQGSVLTNKYAEGYPGKRYYGGCEHVDVVEDIARDRVKEIFGAEHVNVQPHSGAQANMAVYFTILEQGDTVLGMNLSHGGHLTHGSPVNFSGVQYNFVEYGVDAESHRINYDDVLAKAKEHKPKLIVAGASAYPRVIDFKRFREIADEVGAYLMVDMAHIAGLVAAGLHPNPVPHAHFVTTTTHKTLRGPRGGMILCEEQFAKQIDKSIFPGIQGGPLMHVIAAKAVAFGEALQDDFKTYAQNIINNANRLAEGLQKEGLTLVSGGTDNHLILIDVRNLEITGKVAEHVLDEVGITVNKNTIPFETASPFVTSGVRIGTAAVTSRGFGLEDMDEIASLIAYTLKNHENEAALEEARKRVEALTSKFPMYTDL.

Residues L118 and 122-124 contribute to the (6S)-5,6,7,8-tetrahydrofolate site; that span reads GHL. Position 227 is an N6-(pyridoxal phosphate)lysine (K227). (6S)-5,6,7,8-tetrahydrofolate-binding positions include E240 and 350-352; that span reads SPF.

The protein belongs to the SHMT family. As to quaternary structure, homodimer. It depends on pyridoxal 5'-phosphate as a cofactor.

Its subcellular location is the cytoplasm. It carries out the reaction (6R)-5,10-methylene-5,6,7,8-tetrahydrofolate + glycine + H2O = (6S)-5,6,7,8-tetrahydrofolate + L-serine. The protein operates within one-carbon metabolism; tetrahydrofolate interconversion. It functions in the pathway amino-acid biosynthesis; glycine biosynthesis; glycine from L-serine: step 1/1. Its function is as follows. Catalyzes the reversible interconversion of serine and glycine with tetrahydrofolate (THF) serving as the one-carbon carrier. This reaction serves as the major source of one-carbon groups required for the biosynthesis of purines, thymidylate, methionine, and other important biomolecules. Also exhibits THF-independent aldolase activity toward beta-hydroxyamino acids, producing glycine and aldehydes, via a retro-aldol mechanism. This Bacillus thuringiensis (strain Al Hakam) protein is Serine hydroxymethyltransferase.